Consider the following 134-residue polypeptide: MRMLLNLSLLALGAAYVSAFAVENPMNRLVAETLTLLSTHRTWLIGDGNLMIPTPENKNHQLCIKEVFQGIDTLKNQTAHGEAVDKLFQNLSLIKEHIERQKKRCAGERWRVTKFLDYLQVFLGVINTEWTPES.

The signal sequence occupies residues 1 to 21 (MRMLLNLSLLALGAAYVSAFA). N-linked (GlcNAc...) asparagine glycans are attached at residues asparagine 76 and asparagine 90.

Belongs to the IL-5 family. Homodimer; disulfide-linked. Interacts with IL5RA. Interacts with CSF2RB.

The protein resides in the secreted. Functionally, homodimeric cytokine expressed predominantly by T-lymphocytes and NK cells that plays an important role in the survival, differentiation, and chemotaxis of eosinophils. Also acts on activated and resting B-cells to induce immunoglobulin production, growth, and differentiation. Mechanistically, exerts its biological effects through a receptor composed of IL5RA subunit and the cytokine receptor common subunit beta/CSF2RB. Binding to the receptor leads to activation of various kinases including LYN, SYK and JAK2 and thereby propagates signals through the RAS-MAPK and JAK-STAT5 pathways respectively. The protein is Interleukin-5 (IL5) of Canis lupus familiaris (Dog).